The following is a 429-amino-acid chain: Glutamate-1-semialdehyde 2,1-aminomutase (429 aa).

Lys-265 carries the N6-(pyridoxal phosphate)lysine modification.

Belongs to the class-III pyridoxal-phosphate-dependent aminotransferase family. HemL subfamily. As to quaternary structure, homodimer. Pyridoxal 5'-phosphate serves as cofactor.

It is found in the cytoplasm. It catalyses the reaction (S)-4-amino-5-oxopentanoate = 5-aminolevulinate. It participates in porphyrin-containing compound metabolism; protoporphyrin-IX biosynthesis; 5-aminolevulinate from L-glutamyl-tRNA(Glu): step 2/2. The chain is Glutamate-1-semialdehyde 2,1-aminomutase from Chromohalobacter salexigens (strain ATCC BAA-138 / DSM 3043 / CIP 106854 / NCIMB 13768 / 1H11).